Here is a 159-residue protein sequence, read N- to C-terminus: Ribosomal RNA large subunit methyltransferase H (159 aa).

Residues L76, G108, and 127–132 (FGLLTL) contribute to the S-adenosyl-L-methionine site.

This sequence belongs to the RNA methyltransferase RlmH family. In terms of assembly, homodimer.

It is found in the cytoplasm. It catalyses the reaction pseudouridine(1915) in 23S rRNA + S-adenosyl-L-methionine = N(3)-methylpseudouridine(1915) in 23S rRNA + S-adenosyl-L-homocysteine + H(+). In terms of biological role, specifically methylates the pseudouridine at position 1915 (m3Psi1915) in 23S rRNA. This Streptococcus pyogenes serotype M12 (strain MGAS2096) protein is Ribosomal RNA large subunit methyltransferase H.